Consider the following 103-residue polypeptide: N(4)-acetylcytidine amidohydrolase (103 aa).

The region spanning 6–101 (ITFFQRFQDD…QTQFYVIEFK (96 aa)) is the ASCH domain. The Proton acceptor role is filled by Lys-21. The active-site Nucleophile is the Thr-24. The active-site Proton donor is the Glu-74.

The protein belongs to the N(4)-acetylcytidine amidohydrolase family.

The enzyme catalyses N(4)-acetylcytidine + H2O = cytidine + acetate + H(+). The catalysed reaction is N(4)-acetyl-2'-deoxycytidine + H2O = 2'-deoxycytidine + acetate + H(+). It catalyses the reaction N(4)-acetylcytosine + H2O = cytosine + acetate + H(+). Its function is as follows. Catalyzes the hydrolysis of N(4)-acetylcytidine (ac4C). The protein is N(4)-acetylcytidine amidohydrolase (yqfB) of Escherichia coli O81 (strain ED1a).